Consider the following 721-residue polypeptide: Oviduct-specific glycoprotein (721 aa).

The signal sequence occupies residues 1–21 (MGRLLLLAGLVLLMKHSDGTA). The GH18 domain maps to 22-385 (YKLVCYFTNW…HILNELLVQT (364 aa)). C26 and C51 are oxidised to a cystine. Chitin-binding positions include 71–72 (LQ), 98–101 (GGWN), Y142, 211–214 (LSYD), and W355. 2 N-linked (GlcNAc...) asparagine glycosylation sites follow: N402 and N442. A compositionally biased stretch (polar residues) spans 444-456 (TTVPSDGSVTPGG). Residues 444 to 465 (TTVPSDGSVTPGGTASPRKHAV) are disordered. Residue N469 is glycosylated (N-linked (GlcNAc...) asparagine). 21 repeat units span residues 486 to 492 (SKTTTGV), 493 to 499 (SKTTTGI), 500 to 506 (SKTTTGV), 507 to 513 (SKTTTGV), 514 to 520 (SKATAGI), 521 to 527 (SKTIPEI), 528 to 534 (SKATAGV), 535 to 541 (SKTTTGV), 542 to 548 (SKTTTGI), 549 to 555 (SKTITGV), 556 to 562 (SKTTTGI), 563 to 569 (SKTTTGI), 570 to 576 (SKTTTGV), 577 to 583 (SKITTGV), 584 to 590 (SKTTTGI), 591 to 597 (SKTTTGI), 598 to 604 (SQTTTGI), 605 to 611 (SKTTTDI), 612 to 618 (SKTTTGI), 619 to 625 (SKTTPGI), and 626 to 632 (SKTTPGM). The 21 X 7 AA tandem repeats of S-K-[TAI]-[TI]-[TAP]-[GED]-[IVM] stretch occupies residues 486–632 (SKTTTGVSKT…PGISKTTPGM (147 aa)).

It belongs to the glycosyl hydrolase 18 family. Epithelial cells of the oviduct.

It is found in the cytoplasmic vesicle. The protein localises to the secretory vesicle. Its function is as follows. Binds to oocyte zona pellucida in vivo. May play a role in the fertilization process and/or early embryonic development. The polypeptide is Oviduct-specific glycoprotein (Ovgp1) (Mus musculus (Mouse)).